A 316-amino-acid polypeptide reads, in one-letter code: DNA-directed RNA polymerase subunit alpha (316 aa).

The interval 1–229 is alpha N-terminal domain (alpha-NTD); the sequence is MLEMEKPRID…EYLKLFTEID (229 aa). The interval 246-316 is alpha C-terminal domain (alpha-CTD); it reads KDKILEMSIE…LNLSFRKSED (71 aa).

Belongs to the RNA polymerase alpha chain family. As to quaternary structure, homodimer. The RNAP catalytic core consists of 2 alpha, 1 beta, 1 beta' and 1 omega subunit. When a sigma factor is associated with the core the holoenzyme is formed, which can initiate transcription.

The enzyme catalyses RNA(n) + a ribonucleoside 5'-triphosphate = RNA(n+1) + diphosphate. In terms of biological role, DNA-dependent RNA polymerase catalyzes the transcription of DNA into RNA using the four ribonucleoside triphosphates as substrates. The chain is DNA-directed RNA polymerase subunit alpha from Syntrophomonas wolfei subsp. wolfei (strain DSM 2245B / Goettingen).